The chain runs to 938 residues: Isoleucine--tRNA ligase (938 aa).

The 'HIGH' region motif lies at 58–68 (PYANGSIHIGH). Position 561 (E561) interacts with L-isoleucyl-5'-AMP. Positions 602–606 (KMSKS) match the 'KMSKS' region motif. K605 lines the ATP pocket. Zn(2+) contacts are provided by C901, C904, C921, and C924.

Belongs to the class-I aminoacyl-tRNA synthetase family. IleS type 1 subfamily. As to quaternary structure, monomer. It depends on Zn(2+) as a cofactor.

It is found in the cytoplasm. It catalyses the reaction tRNA(Ile) + L-isoleucine + ATP = L-isoleucyl-tRNA(Ile) + AMP + diphosphate. In terms of biological role, catalyzes the attachment of isoleucine to tRNA(Ile). As IleRS can inadvertently accommodate and process structurally similar amino acids such as valine, to avoid such errors it has two additional distinct tRNA(Ile)-dependent editing activities. One activity is designated as 'pretransfer' editing and involves the hydrolysis of activated Val-AMP. The other activity is designated 'posttransfer' editing and involves deacylation of mischarged Val-tRNA(Ile). This chain is Isoleucine--tRNA ligase, found in Sodalis glossinidius (strain morsitans).